Consider the following 255-residue polypeptide: Capsid protein (255 aa).

The Bipartite nuclear localization signal signature appears at 1 to 25 (MVQKRKDLRRSDAGSAVRAKLHKAS).

Belongs to the geminiviridae capsid protein family. Homomultimer. Interacts with the movement protein. Binds to single-stranded and double-stranded viral DNA.

Its subcellular location is the virion. It localises to the host nucleus. In terms of biological role, encapsidates the viral genome into characteristic twinned ('geminate') particles. Binds the genomic viral ssDNA and shuttles it into and out of the cell nucleus. Plays a role in protection of the genome from degradation, virus acquisition and transmission by insect vectors, infectivity, and systemic movement. The CP of monopartite geminiviruses is absolutely essential for virus movement. The protein is Capsid protein of Miscanthus streak virus (isolate 91) (MiSV).